The primary structure comprises 418 residues: UDP-N-acetylglucosamine 1-carboxyvinyltransferase (418 aa).

Residue 22–23 (KN) coordinates phosphoenolpyruvate. UDP-N-acetyl-alpha-D-glucosamine is bound at residue Arg93. Catalysis depends on Cys117, which acts as the Proton donor. Cys117 bears the 2-(S-cysteinyl)pyruvic acid O-phosphothioketal mark. Positions 305 and 327 each coordinate UDP-N-acetyl-alpha-D-glucosamine.

It belongs to the EPSP synthase family. MurA subfamily.

It localises to the cytoplasm. It catalyses the reaction phosphoenolpyruvate + UDP-N-acetyl-alpha-D-glucosamine = UDP-N-acetyl-3-O-(1-carboxyvinyl)-alpha-D-glucosamine + phosphate. Its pathway is cell wall biogenesis; peptidoglycan biosynthesis. Cell wall formation. Adds enolpyruvyl to UDP-N-acetylglucosamine. The sequence is that of UDP-N-acetylglucosamine 1-carboxyvinyltransferase from Alkalilimnicola ehrlichii (strain ATCC BAA-1101 / DSM 17681 / MLHE-1).